The sequence spans 884 residues: E3 ubiquitin-protein ligase BRE1-like 1 (884 aa).

The disordered stretch occupies residues 1-37 (MGSTGEPDRKRRLSSSVAPGGGAPVSPAKRLAVAPTS). Positions 49-86 (YKNQKLSEQLEAHKFEYRALENKFAGLKEKQRTHNETL) form a coiled coil. The interval 107–127 (KSGSPNSSPGSGHNNVQKDGT) is disordered. Residues 108–121 (SGSPNSSPGSGHNN) are compositionally biased toward low complexity. Coiled-coil stretches lie at residues 216–541 (LNNV…ELKL), 580–663 (SKLE…LQQI), 696–762 (RNLQ…QSLD), and 789–827 (KKRI…KEYR). The segment at 832–871 (CGICHDRQKEVVITKCYHLFCNQCIQKSLGNRQRRCPSCS) adopts an RING-type zinc-finger fold.

Belongs to the BRE1 family.

Its subcellular location is the nucleus. The catalysed reaction is S-ubiquitinyl-[E2 ubiquitin-conjugating enzyme]-L-cysteine + [acceptor protein]-L-lysine = [E2 ubiquitin-conjugating enzyme]-L-cysteine + N(6)-ubiquitinyl-[acceptor protein]-L-lysine.. Its pathway is protein modification; protein ubiquitination. In terms of biological role, E3 ubiquitin-protein ligase that monoubiquitinates H2B to form H2BK143ub1. H2BK143ub1 gives a specific tag for epigenetic transcriptional activation and is also prerequisite for H3K4me and maybe H3K79me. It thereby plays a central role in histone code and gene regulation. Forms a ubiquitin ligase complex in cooperation with the E2 enzyme UBC2/RAD6. This Oryza sativa subsp. indica (Rice) protein is E3 ubiquitin-protein ligase BRE1-like 1 (BRE1A).